Reading from the N-terminus, the 285-residue chain is ATP phosphoribosyltransferase (285 aa).

This sequence belongs to the ATP phosphoribosyltransferase family. Long subfamily. Mg(2+) serves as cofactor.

Its subcellular location is the cytoplasm. It carries out the reaction 1-(5-phospho-beta-D-ribosyl)-ATP + diphosphate = 5-phospho-alpha-D-ribose 1-diphosphate + ATP. It functions in the pathway amino-acid biosynthesis; L-histidine biosynthesis; L-histidine from 5-phospho-alpha-D-ribose 1-diphosphate: step 1/9. With respect to regulation, feedback inhibited by histidine. Catalyzes the condensation of ATP and 5-phosphoribose 1-diphosphate to form N'-(5'-phosphoribosyl)-ATP (PR-ATP). Has a crucial role in the pathway because the rate of histidine biosynthesis seems to be controlled primarily by regulation of HisG enzymatic activity. This Streptomyces coelicolor (strain ATCC BAA-471 / A3(2) / M145) protein is ATP phosphoribosyltransferase.